The sequence spans 446 residues: Exodeoxyribonuclease 7 large subunit (446 aa).

The protein belongs to the XseA family. As to quaternary structure, heterooligomer composed of large and small subunits.

The protein resides in the cytoplasm. It catalyses the reaction Exonucleolytic cleavage in either 5'- to 3'- or 3'- to 5'-direction to yield nucleoside 5'-phosphates.. Bidirectionally degrades single-stranded DNA into large acid-insoluble oligonucleotides, which are then degraded further into small acid-soluble oligonucleotides. In Streptococcus pneumoniae (strain Hungary19A-6), this protein is Exodeoxyribonuclease 7 large subunit.